Consider the following 346-residue polypeptide: Holliday junction branch migration complex subunit RuvB (346 aa).

The large ATPase domain (RuvB-L) stretch occupies residues 1–181 (MSDRNPLIDA…FGIPVRLNFY (181 aa)). Residues Leu20, Arg21, Gly62, Lys65, Thr66, Thr67, 128–130 (EDF), Arg171, Tyr181, and Arg218 each bind ATP. A Mg(2+)-binding site is contributed by Thr66. The interval 182–252 (TVEELEYIVR…IADEALSRLE (71 aa)) is small ATPAse domain (RuvB-S). The segment at 255-346 (NRGLDQLDRR…SQYGLFMEDE (92 aa)) is head domain (RuvB-H). 3 residues coordinate DNA: Arg291, Arg310, and Arg315.

It belongs to the RuvB family. Homohexamer. Forms an RuvA(8)-RuvB(12)-Holliday junction (HJ) complex. HJ DNA is sandwiched between 2 RuvA tetramers; dsDNA enters through RuvA and exits via RuvB. An RuvB hexamer assembles on each DNA strand where it exits the tetramer. Each RuvB hexamer is contacted by two RuvA subunits (via domain III) on 2 adjacent RuvB subunits; this complex drives branch migration. In the full resolvosome a probable DNA-RuvA(4)-RuvB(12)-RuvC(2) complex forms which resolves the HJ.

It localises to the cytoplasm. It carries out the reaction ATP + H2O = ADP + phosphate + H(+). Functionally, the RuvA-RuvB-RuvC complex processes Holliday junction (HJ) DNA during genetic recombination and DNA repair, while the RuvA-RuvB complex plays an important role in the rescue of blocked DNA replication forks via replication fork reversal (RFR). RuvA specifically binds to HJ cruciform DNA, conferring on it an open structure. The RuvB hexamer acts as an ATP-dependent pump, pulling dsDNA into and through the RuvAB complex. RuvB forms 2 homohexamers on either side of HJ DNA bound by 1 or 2 RuvA tetramers; 4 subunits per hexamer contact DNA at a time. Coordinated motions by a converter formed by DNA-disengaged RuvB subunits stimulates ATP hydrolysis and nucleotide exchange. Immobilization of the converter enables RuvB to convert the ATP-contained energy into a lever motion, pulling 2 nucleotides of DNA out of the RuvA tetramer per ATP hydrolyzed, thus driving DNA branch migration. The RuvB motors rotate together with the DNA substrate, which together with the progressing nucleotide cycle form the mechanistic basis for DNA recombination by continuous HJ branch migration. Branch migration allows RuvC to scan DNA until it finds its consensus sequence, where it cleaves and resolves cruciform DNA. The chain is Holliday junction branch migration complex subunit RuvB from Brucella suis (strain ATCC 23445 / NCTC 10510).